Reading from the N-terminus, the 157-residue chain is Protein Smg homolog (157 aa).

The protein belongs to the Smg family.

The protein is Protein Smg homolog of Aeromonas salmonicida (strain A449).